A 202-amino-acid chain; its full sequence is Ion-translocating oxidoreductase complex subunit G (202 aa).

A helical membrane pass occupies residues 11 to 31; sequence ACLMGFFSFFSLSSVIFVKNI. Thr176 carries the post-translational modification FMN phosphoryl threonine.

It belongs to the RnfG family. As to quaternary structure, the complex is composed of six subunits: RnfA, RnfB, RnfC, RnfD, RnfE and RnfG. The cofactor is FMN.

The protein resides in the cell inner membrane. In terms of biological role, part of a membrane-bound complex that couples electron transfer with translocation of ions across the membrane. This chain is Ion-translocating oxidoreductase complex subunit G, found in Buchnera aphidicola subsp. Schizaphis graminum (strain Sg).